Here is a 369-residue protein sequence, read N- to C-terminus: Phenylalanine--tRNA ligase alpha subunit (369 aa).

Glu-270 contacts Mg(2+).

The protein belongs to the class-II aminoacyl-tRNA synthetase family. Phe-tRNA synthetase alpha subunit type 1 subfamily. Tetramer of two alpha and two beta subunits. It depends on Mg(2+) as a cofactor.

Its subcellular location is the cytoplasm. The catalysed reaction is tRNA(Phe) + L-phenylalanine + ATP = L-phenylalanyl-tRNA(Phe) + AMP + diphosphate + H(+). The chain is Phenylalanine--tRNA ligase alpha subunit from Phenylobacterium zucineum (strain HLK1).